A 149-amino-acid polypeptide reads, in one-letter code: Nucleoside diphosphate kinase (149 aa).

ATP contacts are provided by Lys-9, Phe-57, Arg-85, Thr-91, Arg-102, and Asn-112. His-115 serves as the catalytic Pros-phosphohistidine intermediate.

It belongs to the NDK family. In terms of assembly, homotetramer. Mg(2+) serves as cofactor.

It localises to the cytoplasm. It catalyses the reaction a 2'-deoxyribonucleoside 5'-diphosphate + ATP = a 2'-deoxyribonucleoside 5'-triphosphate + ADP. The enzyme catalyses a ribonucleoside 5'-diphosphate + ATP = a ribonucleoside 5'-triphosphate + ADP. Functionally, major role in the synthesis of nucleoside triphosphates other than ATP. The ATP gamma phosphate is transferred to the NDP beta phosphate via a ping-pong mechanism, using a phosphorylated active-site intermediate. The protein is Nucleoside diphosphate kinase of Staphylococcus epidermidis (strain ATCC 35984 / DSM 28319 / BCRC 17069 / CCUG 31568 / BM 3577 / RP62A).